The following is a 200-amino-acid chain: Cytochrome c biogenesis ATP-binding export protein CcmA (200 aa).

The ABC transporter domain maps to 1-199 (MRLTGRGLRC…AARELRIGGA (199 aa)). Residue 35-42 (GANGAGKT) participates in ATP binding.

This sequence belongs to the ABC transporter superfamily. CcmA exporter (TC 3.A.1.107) family. The complex is composed of two ATP-binding proteins (CcmA) and two transmembrane proteins (CcmB).

The protein resides in the cell inner membrane. It carries out the reaction heme b(in) + ATP + H2O = heme b(out) + ADP + phosphate + H(+). Functionally, part of the ABC transporter complex CcmAB involved in the biogenesis of c-type cytochromes; once thought to export heme, this seems not to be the case, but its exact role is uncertain. Responsible for energy coupling to the transport system. The polypeptide is Cytochrome c biogenesis ATP-binding export protein CcmA (Rhodopseudomonas palustris (strain BisB18)).